Reading from the N-terminus, the 170-residue chain is 6,7-dimethyl-8-ribityllumazine synthase (170 aa).

5-amino-6-(D-ribitylamino)uracil is bound by residues tryptophan 25, 57-59 (AVE), and 79-81 (AVI). 84–85 (DT) serves as a coordination point for (2S)-2-hydroxy-3-oxobutyl phosphate. The Proton donor role is filled by histidine 87. 5-amino-6-(D-ribitylamino)uracil is bound at residue asparagine 112. Arginine 126 contributes to the (2S)-2-hydroxy-3-oxobutyl phosphate binding site.

This sequence belongs to the DMRL synthase family.

The catalysed reaction is (2S)-2-hydroxy-3-oxobutyl phosphate + 5-amino-6-(D-ribitylamino)uracil = 6,7-dimethyl-8-(1-D-ribityl)lumazine + phosphate + 2 H2O + H(+). It functions in the pathway cofactor biosynthesis; riboflavin biosynthesis; riboflavin from 2-hydroxy-3-oxobutyl phosphate and 5-amino-6-(D-ribitylamino)uracil: step 1/2. Catalyzes the formation of 6,7-dimethyl-8-ribityllumazine by condensation of 5-amino-6-(D-ribitylamino)uracil with 3,4-dihydroxy-2-butanone 4-phosphate. This is the penultimate step in the biosynthesis of riboflavin. The protein is 6,7-dimethyl-8-ribityllumazine synthase of Thermobifida fusca (strain YX).